The primary structure comprises 181 residues: Acireductone dioxygenase (181 aa).

Positions 1–10 (MRAYIYDEES) are enriched in acidic residues. The disordered stretch occupies residues 1–23 (MRAYIYDEESQLSPQDEHESSQS). Residues His82, His84, Glu88, and His128 each contribute to the Fe(2+) site. Ni(2+) is bound by residues His82, His84, Glu88, and His128.

It belongs to the acireductone dioxygenase (ARD) family. Fe(2+) is required as a cofactor. Ni(2+) serves as cofactor.

The protein localises to the cytoplasm. It localises to the nucleus. It carries out the reaction 1,2-dihydroxy-5-(methylsulfanyl)pent-1-en-3-one + O2 = 4-methylsulfanyl-2-oxobutanoate + formate + 2 H(+). It catalyses the reaction 1,2-dihydroxy-5-(methylsulfanyl)pent-1-en-3-one + O2 = 3-(methylsulfanyl)propanoate + CO + formate + 2 H(+). The protein operates within amino-acid biosynthesis; L-methionine biosynthesis via salvage pathway; L-methionine from S-methyl-5-thio-alpha-D-ribose 1-phosphate: step 5/6. Catalyzes 2 different reactions between oxygen and the acireductone 1,2-dihydroxy-3-keto-5-methylthiopentene (DHK-MTPene) depending upon the metal bound in the active site. Fe-containing acireductone dioxygenase (Fe-ARD) produces formate and 2-keto-4-methylthiobutyrate (KMTB), the alpha-ketoacid precursor of methionine in the methionine recycle pathway. Ni-containing acireductone dioxygenase (Ni-ARD) produces methylthiopropionate, carbon monoxide and formate, and does not lie on the methionine recycle pathway. This Puccinia graminis f. sp. tritici (strain CRL 75-36-700-3 / race SCCL) (Black stem rust fungus) protein is Acireductone dioxygenase.